Reading from the N-terminus, the 531-residue chain is GTPase Obg (531 aa).

The Obg domain occupies 2-159 (ASFVDRVIVH…QEVELELKSI (158 aa)). In terms of domain architecture, OBG-type G spans 160–341 (ADIALVGFPS…LSFAMAALVS (182 aa)). Residues 166 to 173 (GFPSAGKS), 191 to 195 (FTTLV), 212 to 215 (DVPG), 293 to 296 (NKVD), and 322 to 324 (STA) each bind GTP. Residues S173 and T193 each contribute to the Mg(2+) site. Positions 346-365 (QEEQREQQRQTVPVLQPEPV) are disordered. The region spanning 368–453 (RRGRDRREFV…ENGVVFDWEP (86 aa)) is the OCT domain. Residues 459–531 (AELLGGPRGS…TSETKETNEK (73 aa)) form a disordered region. Basic and acidic residues-rich tracts occupy residues 468–507 (SDLR…ERRA) and 514–531 (VDAR…TNEK).

This sequence belongs to the TRAFAC class OBG-HflX-like GTPase superfamily. OBG GTPase family. As to quaternary structure, monomer. It depends on Mg(2+) as a cofactor.

It is found in the cytoplasm. An essential GTPase which binds GTP, GDP and possibly (p)ppGpp with moderate affinity, with high nucleotide exchange rates and a fairly low GTP hydrolysis rate. Plays a role in control of the cell cycle, stress response, ribosome biogenesis and in those bacteria that undergo differentiation, in morphogenesis control. The sequence is that of GTPase Obg from Kocuria rhizophila (strain ATCC 9341 / DSM 348 / NBRC 103217 / DC2201).